The chain runs to 889 residues: Cytoplasmic aconitate hydratase (889 aa).

Residues Gln-86 and 205-207 each bind substrate; that span reads DSH. 3 residues coordinate [4Fe-4S] cluster: Cys-437, Cys-503, and Cys-506. Positions 536 and 541 each coordinate substrate. Phosphothreonine is present on Thr-628. Residues Arg-699 and 779-780 contribute to the substrate site; that span reads SR.

The protein belongs to the aconitase/IPM isomerase family. In terms of assembly, interacts (when associated with the 4Fe-4S) with FBXL5. Interacts with frataxin(81-210). [4Fe-4S] cluster is required as a cofactor.

Its subcellular location is the cytoplasm. The protein resides in the cytosol. It catalyses the reaction citrate = D-threo-isocitrate. Functionally, bifunctional iron sensor that switches between 2 activities depending on iron availability. Iron deprivation, promotes its mRNA binding activity through which it regulates the expression of genes involved in iron uptake, sequestration and utilization. Binds to iron-responsive elements (IRES) in the untranslated region of target mRNAs preventing for instance the translation of ferritin and aminolevulinic acid synthase and stabilizing the transferrin receptor mRNA. Its function is as follows. Conversely, when cellular iron levels are high, binds a 4Fe-4S cluster which precludes RNA binding activity and promotes the aconitase activity, the isomerization of citrate to isocitrate via cis-aconitate. The protein is Cytoplasmic aconitate hydratase (ACO1) of Homo sapiens (Human).